The following is a 506-amino-acid chain: F-box protein At4g02760 (506 aa).

Residues 115-161 form the F-box domain; sequence TSWPLLPELTIKVFSMLDTKSLMQASACCTMFNKCAMDRVCYSHIDL. Positions 452 to 506 are disordered; it reads TFVAEFRSPSPSESDVRSPSPSSSSDSSSSSDSSSSSSSGESSDESGTEEEEDED. Residues 459 to 492 show a composition bias toward low complexity; sequence SPSPSESDVRSPSPSSSSDSSSSSDSSSSSSSGE. Over residues 493–506 the composition is skewed to acidic residues; it reads SSDESGTEEEEDED.

The chain is F-box protein At4g02760 from Arabidopsis thaliana (Mouse-ear cress).